Consider the following 929-residue polypeptide: Dual specificity protein phosphatase PHS1 (929 aa).

2 disordered regions span residues 1–27 and 545–618; these read MAEPEKKRDQPFSQEKDEEKDLYLVHD and PESP…SLSS. 2 stretches are compositionally biased toward basic and acidic residues: residues 552 to 580 and 591 to 606; these read HGHEVNHYPSPSKDRVPSDNSSDHSESDM and ENKEDGSSPKSRESWH. The 146-residue stretch at 703–848 folds into the Tyrosine-protein phosphatase domain; the sequence is KPSMIQENLF…LINLDKKCHG (146 aa). Cys792 serves as the catalytic Phosphocysteine intermediate. Residue 792-798 participates in substrate binding; sequence CFEGRSR. The short motif at 903 to 911 is the Nuclear export signal element; sequence QKALEALKL.

Interacts with MPK18. As to expression, expressed in roots, leaves and flowers.

The protein localises to the cytoplasm. It catalyses the reaction O-phospho-L-seryl-[protein] + H2O = L-seryl-[protein] + phosphate. The enzyme catalyses O-phospho-L-threonyl-[protein] + H2O = L-threonyl-[protein] + phosphate. It carries out the reaction O-phospho-L-tyrosyl-[protein] + H2O = L-tyrosyl-[protein] + phosphate. Its function is as follows. Probable dual specificity phosphatase that binds and dephosphorylates MPK18, modulating the organization and dynamics of cortical microtubules. Acts as a negative regulator of abscisic acid (ABA) signaling during seed germination and light-induced stomata aperture. This chain is Dual specificity protein phosphatase PHS1 (PHS1), found in Arabidopsis thaliana (Mouse-ear cress).